We begin with the raw amino-acid sequence, 1337 residues long: Partitioning defective 3 homolog (1337 aa).

S25 bears the Phosphoserine mark. Disordered stretches follow at residues 81 to 109 (EQDP…SELG) and 143 to 263 (SSDP…LENM). T91 bears the Phosphothreonine mark. A compositionally biased stretch (low complexity) spans 91 to 100 (TSASSTGTQS). Polar residues-rich tracts occupy residues 150 to 163 (GLST…FSSE) and 171 to 188 (TRWS…TGSP). 2 positions are modified to phosphoserine: S156 and S174. Basic and acidic residues predominate over residues 190 to 203 (TCDRKKDENYRSLP). Positions 207–224 (SSWSNQFQRDNARSSLSA) are enriched in polar residues. In terms of domain architecture, PDZ 1 spans 271-359 (MVKLVQVPND…ARVIWFHVVP (89 aa)). At S383 the chain carries Phosphoserine. The disordered stretch occupies residues 397–441 (NAPQALPRAPRLSQPPEQLDAHPRLPHSAHASTKPPTAPALAPPN). PDZ domains lie at 461-546 (NIQL…LVFR) and 590-677 (EVPL…GMIQ). The residue at position 489 (Y489) is a Phosphotyrosine. A phosphoserine mark is found at S692, S695, S715, S728, S809, and S827. The interaction with PRKCI and PRKCZ stretch occupies residues 712 to 936 (RRISHSLYSG…AAIDKSYDKP (225 aa)). K834 bears the N6-acetyllysine mark. S837 bears the Phosphoserine mark. The residue at position 851 (K851) is an N6-acetyllysine. Phosphoserine is present on residues S852 and S873. 5 disordered regions span residues 866 to 888 (VDDQ…KKSS), 932 to 1015 (SYDK…AKKG), 1028 to 1055 (KHRK…DRVR), 1110 to 1271 (LNAR…LGGH), and 1284 to 1337 (LLRQ…PFYS). Residue K885 is modified to N6-acetyllysine. Positions 935–1337 (KPMVDDDDEG…TPEKGRPFYS (403 aa)) are interaction with FRMD4A. Over residues 939–953 (DDDDEGMETLEEDTE) the composition is skewed to acidic residues. The residue at position 962 (S962) is a Phosphoserine; by AURKA. Phosphoserine is present on residues S971 and S973. Composition is skewed to basic and acidic residues over residues 981–1009 (DPEK…EKDK) and 1030–1043 (RKDD…RIKI). Residue S1046 is modified to Phosphoserine. A coiled-coil region spans residues 1050–1082 (EEDRVRMKEEQERIQAKTREFRERQARERDYAE). A compositionally biased stretch (polar residues) spans 1138–1147 (PGDSNRSTPS). Residues 1148 to 1175 (NHDRIQRLRQEFQQAKQDEDVEDRRRTY) show a composition bias toward basic and acidic residues. Coiled-coil stretches lie at residues 1149 to 1172 (HDRI…EDRR), 1199 to 1222 (VQVQ…YSSL), and 1278 to 1299 (MLET…LKKQ). Low complexity predominate over residues 1180–1203 (SWSSSRPASQSGRHSVSVEVQVQR). Over residues 1219 to 1240 (YSSLPRQSRKNASSVSQDSWEQ) the composition is skewed to polar residues. Positions 1284 to 1296 (LLRQEQRRKEQQL) are enriched in basic and acidic residues. Polar residues predominate over residues 1318–1327 (SQVARLNRLQ). Over residues 1328–1337 (TPEKGRPFYS) the composition is skewed to basic and acidic residues. K1331 bears the N6-acetyllysine mark.

Belongs to the PAR3 family. As to quaternary structure, component of a complex whose core is composed of ARHGAP17, AMOT, PALS1, PATJ and PARD3/PAR3. Interacts (via PDZ 1 domain) with PARD6A, PARD6B and F11R/JAM1. Interacts with AURKA, AURKB and SIRT2. Interacts with PRKCI. Interacts with PRKCZ. Part of a complex with PARD6A or PARD6B, PRKCI or PRKCZ and CDC42 or RAC1. Interacts with LIMK2 and CDH5. Component of the Par polarity complex, composed of at least phosphorylated PRKCZ, PARD3 and TIAM1. Directly interacts with TIAM1 and TIAM2. Interacts with ECT2 and FBF1. Interacts (via PDZ 3 domain) with PTEN (via C-terminus). Interacts (via coiled-coil domain) with FRMD4A. Found in a complex with PARD3, CYTH1 and FRMD4A. Interacts with SAPCD2. Interacts with PRKCA. Interacts with PRKCZ. In terms of processing, acetylated. Deacetylated by SIRT2, thereby inhibiting Schwann cell peripheral myelination. Phosphorylation at Ser-827 by PRKCZ and PRKCI occurs at the most apical tip of epithelial cell-cell contacts during the initial phase of tight junction formation and may promote dissociation of the complex with PARD6. EGF-induced Tyr-1127 phosphorylation mediates dissociation from LIMK2. Phosphorylation by AURKA at Ser-962 is required for the normal establishment of neuronal polarity. Isoform 1 is predominantly expressed in lung, glandular stomach, prostate, ovary and uterus. Isoform 1 is also expressed in brain, with a high expression in the cortex, hippocampus and in the striatum. Isoform 2 is predominantly expressed in intestinal epithelial cells, kidney and prostate.

The protein resides in the cytoplasm. It localises to the endomembrane system. The protein localises to the cell junction. Its subcellular location is the tight junction. It is found in the adherens junction. The protein resides in the cell cortex. It localises to the cytoskeleton. The protein localises to the cell membrane. Functionally, adapter protein involved in asymmetrical cell division and cell polarization processes. Seems to play a central role in the formation of epithelial tight junctions. Association with PARD6B may prevent the interaction of PARD3 with F11R/JAM1, thereby preventing tight junction assembly. The PARD6-PARD3 complex links GTP-bound Rho small GTPases to atypical protein kinase C proteins. Required for establishment of neuronal polarity and normal axon formation in cultured hippocampal neurons. Involved in Schwann cell peripheral myelination. Targets the phosphatase PTEN to cell junctions. The protein is Partitioning defective 3 homolog (Pard3) of Rattus norvegicus (Rat).